The chain runs to 74 residues: Translation initiation factor IF-1 (74 aa).

One can recognise an S1-like domain in the interval 1 to 72 (MAKETEMEFE…TRGRITYRKI (72 aa)).

Belongs to the IF-1 family. In terms of assembly, component of the 30S ribosomal translation pre-initiation complex which assembles on the 30S ribosome in the order IF-2 and IF-3, IF-1 and N-formylmethionyl-tRNA(fMet); mRNA recruitment can occur at any time during PIC assembly.

The protein localises to the cytoplasm. Functionally, one of the essential components for the initiation of protein synthesis. Stabilizes the binding of IF-2 and IF-3 on the 30S subunit to which N-formylmethionyl-tRNA(fMet) subsequently binds. Helps modulate mRNA selection, yielding the 30S pre-initiation complex (PIC). Upon addition of the 50S ribosomal subunit IF-1, IF-2 and IF-3 are released leaving the mature 70S translation initiation complex. The protein is Translation initiation factor IF-1 of Mycoplasma capricolum subsp. capricolum (strain California kid / ATCC 27343 / NCTC 10154).